The following is a 61-amino-acid chain: [Thr6]-bradykinyl-Val,Asp (61 aa).

A signal peptide spans Met-1–Cys-22. A propeptide spanning residues Glu-23 to Glu-50 is cleaved from the precursor. Residues Glu-24–Asp-61 are disordered. Residues Glu-30 to Glu-41 show a composition bias toward acidic residues. Position 53 is a 4-hydroxyproline; in form [Hyp3,Thr6]-bradykinyl-Val,Asp and [Hyp3,Thr6]-bradykinin (Pro-53).

Belongs to the frog skin active peptide (FSAP) family. Bradykinin-related peptide subfamily. As to expression, expressed by the skin glands.

It localises to the secreted. Functionally, induces relaxation of rat smooth muscle from tail artery (EC(50)=16.8 nM) and contraction of that from ileum (EC(50)=205 nM), urinary bladder (EC(50)=895 nM) and uterus (EC(50)=60.3 nM). Binds to both bradykinin receptor B1 (BDKRB1) and B2 (BDKRB2). In terms of biological role, [Hyp3,Thr6]-bradykinin: Induces relaxation of rat smooth muscle from tail artery (EC(50)=56.7 nM) and contraction of that from ileum (EC(50)=588 nM), urinary bladder (EC(50)=4.6 uM) and uterus (EC(50)=3.9 nM). Binds to both bradykinin receptor B1 (BDKRB1) and B2 (BDKRB2). In arterial smooth muscle, the effect via BDKRB1 is stronger, in uterus, ileum and urinary bladder that via BDKRB2. Induces relaxation of rat smooth muscle from tail artery (EC(50)=10.8 nM) and contraction of that from ileum (EC(50)=645 nM), urinary bladder (EC(50)=1.1 uM) and uterus (EC(50)=1.2 uM). Binds to both bradykinin receptor B1 (BDKRB1) and B2 (BDKRB2). Apart from uterus smooth muscle, the effect via B2 is stronger. Its function is as follows. [Hyp3,Thr6]-bradykinyl-Val,Asp: Induces relaxation of rat smooth muscle from tail artery (EC(50)=3.5 nM) and contraction of that from ileum (EC(50)=223 nM), urinary bladder (EC(50)=1.5 uM) and uterus (EC(50)=356 nM). Binds to both bradykinin receptor B1 (BDKRB1) and B2 (BDKRB2); the effects via B2 a stronger. The sequence is that of [Thr6]-bradykinyl-Val,Asp from Agalychnis callidryas (Red-eyed tree frog).